Here is a 921-residue protein sequence, read N- to C-terminus: Sodium/calcium exchanger 2 (921 aa).

The N-terminal stretch at 1 to 20 is a signal peptide; that stretch reads MAPLALVGVALLLGAPHCLG. The Extracellular portion of the chain corresponds to 21-68; the sequence is EATPTPSLPPPPANDSDASPGGCQGSYRCQPGVLLPVWEPDDPSLGDK. Positions 23–42 are disordered; that stretch reads TPTPSLPPPPANDSDASPGG. An N-linked (GlcNAc...) asparagine glycan is attached at Asn34. Residues 69–90 traverse the membrane as a helical segment; that stretch reads AARAVVYFVAMVYMFLGLSIIA. The Cytoplasmic portion of the chain corresponds to 91 to 130; the sequence is DRFMASIEVITSKEKEITITKANGETSVGTVRIWNETVSN. A helical transmembrane segment spans residues 131–152; that stretch reads LTLMALGSSAPEILLSVIEVCG. The Alpha-1 repeat unit spans residues 135–175; that stretch reads ALGSSAPEILLSVIEVCGHNFQAGELGPGTIVGSAAFNMFV. The Extracellular segment spans residues 153-164; the sequence is HNFQAGELGPGT. Residues 165–185 traverse the membrane as a helical segment; it reads IVGSAAFNMFVVIAVCVYVIP. Residues 186–196 are Cytoplasmic-facing; that stretch reads AGESRKIKHLR. A helical membrane pass occupies residues 197–219; sequence VFFVTASWSIFAYVWLYLILAVF. The Extracellular segment spans residues 220-222; the sequence is SPG. A helical transmembrane segment spans residues 223-246; sequence VVQVWEALLTLVFFPVCVVFAWMA. Residues 247–720 are Cytoplasmic-facing; it reads DKRLLFYKYV…DGSREERLPS (474 aa). The putative calmodulin-binding region stretch occupies residues 248–267; the sequence is KRLLFYKYVYKRYRTDPRSG. The segment at 372-391 is disordered; sequence AADAARRPGANDGAPDDEDD. Calx-beta domains lie at 384-483 and 512-612; these read GAPD…VRLL and ATVT…IELG. Ca(2+) is bound by residues Glu407, Asp443, Asp468, Asp469, Ile471, Glu473, Glu476, Asp518, Asp519, Asp520, Glu536, Asp598, Glu599, and Glu600. Ser622 is modified (phosphoserine). Glu665 serves as a coordination point for Ca(2+). Residues 721–740 traverse the membrane as a helical segment; it reads CFDYVMHFLTVFWKVLFACL. Residues 741 to 747 are Extracellular-facing; it reads PPTEYCH. The chain crosses the membrane as a helical span at residues 748 to 770; sequence GWACFGVCILVIGLLTALIGDLA. Topologically, residues 771–772 are cytoplasmic; that stretch reads SH. A helical transmembrane segment spans residues 773 to 791; it reads FGCTVGLKDSVNAVVFVAL. The Alpha-2 repeat unit spans residues 790–826; that stretch reads ALGTSIPDTFASKVAALQDQCADASIGNVTGSNAVNV. At 792–822 the chain is on the extracellular side; sequence GTSIPDTFASKVAALQDQCADASIGNVTGSN. Asn817 is a glycosylation site (N-linked (GlcNAc...) asparagine). The helical transmembrane segment at 823–843 threads the bilayer; it reads AVNVFLGLGVAWSVAAVYWAV. The Cytoplasmic portion of the chain corresponds to 844–854; the sequence is QGRPFEVRTGT. A helical membrane pass occupies residues 855 to 875; that stretch reads LAFSVTLFTVFAFVGIAVLLY. Residues 876-892 are Extracellular-facing; it reads RRRPHIGGELGGPRGPK. Residues 893 to 909 traverse the membrane as a helical segment; the sequence is LATTALFLGLWFLYILF. Residues 910–921 lie on the Cytoplasmic side of the membrane; it reads ASLEAYCHIRGF.

This sequence belongs to the Ca(2+):cation antiporter (CaCA) (TC 2.A.19) family. SLC8 subfamily. In terms of tissue distribution, detected in neocortex and hippocampus on pyramidal cells, astrocyte processes and dendrites (at protein level). Brain and skeletal muscle.

Its subcellular location is the cell membrane. It is found in the basolateral cell membrane. It localises to the perikaryon. The protein resides in the cell projection. The protein localises to the dendrite. Its subcellular location is the dendritic spine. It catalyses the reaction Ca(2+)(in) + 3 Na(+)(out) = Ca(2+)(out) + 3 Na(+)(in). Calcium transport is down-regulated by Na(+) and stimulated by Ca(2+). In terms of biological role, mediates the electrogenic exchange of Ca(2+) against Na(+) ions across the cell membrane, and thereby contributes to the regulation of cytoplasmic Ca(2+) levels and Ca(2+)-dependent cellular processes. Contributes to cellular Ca(2+) homeostasis in excitable cells. Contributes to the rapid decrease of cytoplasmic Ca(2+) levels back to baseline after neuronal activation, and thereby contributes to modulate synaptic plasticity, learning and memory. Plays a role in regulating urinary Ca(2+) and Na(+) excretion. In Rattus norvegicus (Rat), this protein is Sodium/calcium exchanger 2 (Slc8a2).